A 284-amino-acid chain; its full sequence is 2-dehydro-3-deoxyphosphooctonate aldolase (284 aa).

The protein belongs to the KdsA family.

It is found in the cytoplasm. It catalyses the reaction D-arabinose 5-phosphate + phosphoenolpyruvate + H2O = 3-deoxy-alpha-D-manno-2-octulosonate-8-phosphate + phosphate. It participates in carbohydrate biosynthesis; 3-deoxy-D-manno-octulosonate biosynthesis; 3-deoxy-D-manno-octulosonate from D-ribulose 5-phosphate: step 2/3. The protein operates within bacterial outer membrane biogenesis; lipopolysaccharide biosynthesis. The protein is 2-dehydro-3-deoxyphosphooctonate aldolase of Salmonella paratyphi A (strain ATCC 9150 / SARB42).